Here is a 720-residue protein sequence, read N- to C-terminus: Calpain-12 (720 aa).

Residues 45–341 enclose the Calpain catalytic domain; that stretch reads LFRDPCFPAG…FNTVQICSLS (297 aa). Catalysis depends on residues Cys-105, His-259, and Asn-283. The tract at residues 342–541 is domain III; sequence PEVLGPSPAG…DDVISADLDA (200 aa). The span at 393–403 shows a compositional bias: acidic residues; that stretch reads DEEEDDDDEEG. Residues 393–415 form a disordered region; it reads DEEEDDDDEEGPWGGWGAAGARG. A domain IV region spans residues 542 to 720; the sequence is LQAPYKPLEL…KQWSEVATFS (179 aa). The EF-hand domain maps to 621–656; that stretch reads GHLMSWQATFDKFDEDASGTMNSCELRLALTAAGFH. Asp-634, Asp-636, Ser-638, Thr-640, and Glu-645 together coordinate Ca(2+).

This sequence belongs to the peptidase C2 family. Expression localized to the cortex of the hair follicle during the anagen phase of hair cycle.

Calcium-regulated non-lysosomal thiol-protease. This chain is Calpain-12 (Capn12), found in Mus musculus (Mouse).